We begin with the raw amino-acid sequence, 275 residues long: Small ribosomal subunit protein uS3 (275 aa).

The KH type-2 domain occupies 39-107; the sequence is VRIYLKKKLK…PVHVNIEEIR (69 aa). The interval 216–275 is disordered; the sequence is AAATSAEPAAEEKKTRRAPSKTAARKPAAGTDKPLVAAKPAVKRVRKVETPAADTQKSGE.

The protein belongs to the universal ribosomal protein uS3 family. In terms of assembly, part of the 30S ribosomal subunit. Forms a tight complex with proteins S10 and S14.

Its function is as follows. Binds the lower part of the 30S subunit head. Binds mRNA in the 70S ribosome, positioning it for translation. This chain is Small ribosomal subunit protein uS3, found in Polynucleobacter asymbioticus (strain DSM 18221 / CIP 109841 / QLW-P1DMWA-1) (Polynucleobacter necessarius subsp. asymbioticus).